The chain runs to 421 residues: Fusaric acid cluster transcription factor FUB10 (421 aa).

Residues 16–47 (CDRCRAQKLRCHRDSGHSTDACLRCLKSGIEC) constitute a DNA-binding region (zn(2)-C6 fungal-type). The disordered stretch occupies residues 50 to 92 (SKARPTGRPPSRQVQPTVVVEQGDTSSSSHTTDSSPSAGGTDM). Low complexity predominate over residues 74–86 (TSSSSHTTDSSPS).

Its subcellular location is the nucleus. Functionally, transcription factor that regulates the expression of the gene cluster that mediates the biosynthesis of fusaric acid, a mycotoxin with low to moderate toxicity to animals and humans, but with high phytotoxic properties. In Gibberella moniliformis (strain M3125 / FGSC 7600) (Maize ear and stalk rot fungus), this protein is Fusaric acid cluster transcription factor FUB10.